The chain runs to 94 residues: RING finger protein Z (94 aa).

Positions 1–19 are enriched in polar residues; it reads MGNCNGASKSNQPDSSRVT. The disordered stretch occupies residues 1-20; sequence MGNCNGASKSNQPDSSRVTQ. Glycine 2 carries the N-myristoyl glycine; by host lipid modification. The RING-type; atypical zinc-finger motif lies at 39-75; sequence CKCCWFADTNLITCNDHYLCLRCHQVMLRNSDLCNIC. The PTAP/PSAP motif motif lies at 89–92; the sequence is PTAP.

Belongs to the arenaviridae Z protein family. As to quaternary structure, interacts with protein NP; this interaction probably directs the encapsidated genome to budding sites. Interacts (via RING domain) with polymerase L; this interaction inhibits viral transcription and replication, Z partially blocks the product exit tunnel for the releasing nascent RNA product. Interacts with the glycoprotein complex; this interaction plays a role in virion budding. Interacts with host eIF4E; this interaction results in eIF4E reduced affinity for its substrate, the 5'-m7 G cap structure. Interacts (via late-budding domain) with host TSG101; this interaction is essential for budding and release of viral particles. Interacts with host RPLP0; this interaction may serve to load ribosome-like particles inside the virion. Interacts with host PML; this interaction induces PML bodies redistribution in the cytoplasm upon viral infection. Myristoylation is required for the role of RING finger protein Z in assembly and budding.

It is found in the virion. Its subcellular location is the host cytoplasm. It localises to the host perinuclear region. The protein localises to the host cell membrane. In terms of biological role, plays a crucial role in virion assembly and budding. Expressed late in the virus life cycle, it acts as an inhibitor of viral transcription and RNA synthesis by interacting with the viral polymerase L. Presumably recruits the NP encapsidated genome to cellular membranes at budding sites via direct interaction with NP. Plays critical roles in the final steps of viral release by interacting with host TSG101, a member of the vacuolar protein-sorting pathway and using other cellular host proteins involved in vesicle formation pathway. The budding of the virus progeny occurs after association of protein Z with the viral glycoprotein complex SSP-GP1-GP2 at the cell periphery, step that requires myristoylation of protein Z. Also selectively represses protein production by associating with host eIF4E. In cell-based minigenome assay, has an inhibitory effect on the ribonucleoprotein machinery (vRNP), which is responsible for the replication and transcription of the viral genome. In Akodon azarae (Azara's grass mouse), this protein is RING finger protein Z.